Reading from the N-terminus, the 121-residue chain is Large ribosomal subunit protein eL8 (121 aa).

It belongs to the eukaryotic ribosomal protein eL8 family. In terms of assembly, part of the 50S ribosomal subunit. Probably part of the RNase P complex.

The protein localises to the cytoplasm. Functionally, multifunctional RNA-binding protein that recognizes the K-turn motif in ribosomal RNA, the RNA component of RNase P, box H/ACA, box C/D and box C'/D' sRNAs. The polypeptide is Large ribosomal subunit protein eL8 (Thermoplasma volcanium (strain ATCC 51530 / DSM 4299 / JCM 9571 / NBRC 15438 / GSS1)).